The chain runs to 203 residues: Small ribosomal subunit protein uS2 (203 aa).

The protein belongs to the universal ribosomal protein uS2 family.

The protein is Small ribosomal subunit protein uS2 of Methanoregula boonei (strain DSM 21154 / JCM 14090 / 6A8).